A 437-amino-acid polypeptide reads, in one-letter code: Rhoptry apical surface protein 2 (437 aa).

In terms of domain architecture, C2 spans 45–179 (GCLGSLFFYL…PRINLSLHKL (135 aa)). One can recognise a PH domain in the interval 230–338 (EGPLERLNAN…FIEKLRAYRE (109 aa)). The tract at residues 341 to 437 (STRVPSQKGA…SVVGDEEPQT (97 aa)) is disordered. Positions 375-384 (RKSGGKKSRR) are enriched in basic residues.

In terms of assembly, interacts with RASP1. Interacts with RASP3.

The protein resides in the cytoplasmic vesicle. It is found in the secretory vesicle. Its subcellular location is the rhoptry membrane. Its function is as follows. Essential for tachyzoite invasion of host cells by controlling rhoptry secretion. Binds to phosphatidic acid (PA) and phosphatidylinositol 4,5-bisphosphate (PIP2) lipids and thus, likely contributes to the assembly of the machinery that docks or primes the rhoptry to the parasite cell membrane prior to the fusion with the host cell membrane. The sequence is that of Rhoptry apical surface protein 2 from Toxoplasma gondii (strain ATCC 50853 / GT1).